Reading from the N-terminus, the 196-residue chain is ATP-dependent Clp protease proteolytic subunit (196 aa).

The active-site Nucleophile is the Ser96. His121 is a catalytic residue.

It belongs to the peptidase S14 family. Fourteen ClpP subunits assemble into 2 heptameric rings which stack back to back to give a disk-like structure with a central cavity, resembling the structure of eukaryotic proteasomes.

It is found in the cytoplasm. The enzyme catalyses Hydrolysis of proteins to small peptides in the presence of ATP and magnesium. alpha-casein is the usual test substrate. In the absence of ATP, only oligopeptides shorter than five residues are hydrolyzed (such as succinyl-Leu-Tyr-|-NHMec, and Leu-Tyr-Leu-|-Tyr-Trp, in which cleavage of the -Tyr-|-Leu- and -Tyr-|-Trp bonds also occurs).. Its function is as follows. Cleaves peptides in various proteins in a process that requires ATP hydrolysis. Has a chymotrypsin-like activity. Plays a major role in the degradation of misfolded proteins. This Streptococcus mutans serotype c (strain ATCC 700610 / UA159) protein is ATP-dependent Clp protease proteolytic subunit.